The sequence spans 83 residues: Antitoxin ParD1 (83 aa).

Residues Ile33–Ser60 are a coiled coil. The segment at Leu54–Arg83 is disordered.

It belongs to the ParD antitoxin family.

Antitoxin component of a type II toxin-antitoxin (TA) system. The protein is Antitoxin ParD1 (parD1) of Mycobacterium tuberculosis (strain CDC 1551 / Oshkosh).